The sequence spans 333 residues: MDTVLTIGSHSSLQILHGAKKEGFKTVQITPKNRVNFYSQFSFIDEILGYNNEDEAVEFVNKYSNRGALIPHGSLVEYVGSERVSKITTKIFGNRNLFAWESNQKKKMSLLRRSGIQVPEEFENVEDVDRLVIVKLPGAKGGKGYFIAKTKSEVKEGLNRLISSKLIKDVNDVIIQEYVIGVPMYFQFFYSPILNRLEITGIDIRYETNVDGLRRLPENLADPTFVVVGNIPAVARESLLPKVYDYGMSFVNTVKEVVPPGMIGPFCLESVVKDDGSIVVFEFSGRIVAGTNLYIAGSPYSWLYWDEPMSVGRRISREIRLALNSNKLEVIFT.

Positions 10 and 74 each coordinate 5-amino-1-(5-phospho-beta-D-ribosyl)imidazole-4-carboxamide. Positions Arg95 to Asn324 constitute an ATP-grasp domain. ATP is bound by residues Val125 to Tyr185 and Glu207. Asn230 lines the 5-amino-1-(5-phospho-beta-D-ribosyl)imidazole-4-carboxamide pocket. Positions 269 and 282 each coordinate Mg(2+).

The protein belongs to the phosphohexose mutase family. Requires Mg(2+) as cofactor. Mn(2+) is required as a cofactor.

It catalyses the reaction 5-amino-1-(5-phospho-beta-D-ribosyl)imidazole-4-carboxamide + formate + ATP = 5-formamido-1-(5-phospho-D-ribosyl)imidazole-4-carboxamide + ADP + phosphate. Its pathway is purine metabolism; IMP biosynthesis via de novo pathway; 5-formamido-1-(5-phospho-D-ribosyl)imidazole-4-carboxamide from 5-amino-1-(5-phospho-D-ribosyl)imidazole-4-carboxamide (formate route): step 1/1. Its function is as follows. Catalyzes the ATP- and formate-dependent formylation of 5-aminoimidazole-4-carboxamide-1-beta-d-ribofuranosyl 5'-monophosphate (AICAR) to 5-formaminoimidazole-4-carboxamide-1-beta-d-ribofuranosyl 5'-monophosphate (FAICAR) in the absence of folates. In Sulfolobus acidocaldarius (strain ATCC 33909 / DSM 639 / JCM 8929 / NBRC 15157 / NCIMB 11770), this protein is 5-formaminoimidazole-4-carboxamide-1-(beta)-D-ribofuranosyl 5'-monophosphate synthetase.